A 687-amino-acid polypeptide reads, in one-letter code: E3 ubiquitin-protein ligase RNF19B (687 aa).

A required for ubiquitin ligase activity and for protection against staurosporin-induced cell death region spans residues 1–294 (MRLRNDCLVR…VCGCEFCWLC (294 aa)). Positions 53–88 (RTRAAPEPSVPSPPPSPPPPPPPPVSVPPPPSSPGG) are disordered. Over residues 60 to 85 (PSVPSPPPSPPPPPPPPVSVPPPPSS) the composition is skewed to pro residues. A TRIAD supradomain region spans residues 91–313 (SLIECPLCLV…LSPSGCTFWG (223 aa)). The Zn(2+) site is built by C95, C98, C118, C121, C182, C187, C204, C209, C214, C217, H222, C227, C263, and C266. The RING-type 1 zinc-finger motif lies at 95-144 (CPLCLVRQPPEEIPELLSCRHRSCLRCLRQYLRIEICESRVNLRCPECAE). An IBR-type zinc finger spans residues 161-227 (TRKYEEFLLR…KHVWHPNQTC (67 aa)). The segment at 263-294 (CPRCSAYIIKMNDGSCNHMTCSVCGCEFCWLC) adopts an RING-type 2; atypical zinc-finger fold. C278 is a catalytic residue. Zn(2+) contacts are provided by C283, C286, C291, C294, H302, and C309. 2 helical membrane passes run 330-350 (LIGA…AMVI) and 391-411 (VVAA…VYGV). Residues 618-662 (SIRSDLESSDAQSDDVPDLASEEYDSPHLFPPSPSNALQESPPHR) are disordered. A compositionally biased stretch (acidic residues) spans 629–641 (QSDDVPDLASEEY).

It belongs to the RBR family. RNF19 subfamily. As to quaternary structure, interacts with UBE2L3, UBE2L6 and UCKL1.

It localises to the cytoplasmic granule membrane. It is found in the endoplasmic reticulum membrane. The catalysed reaction is [E2 ubiquitin-conjugating enzyme]-S-ubiquitinyl-L-cysteine + [acceptor protein]-L-lysine = [E2 ubiquitin-conjugating enzyme]-L-cysteine + [acceptor protein]-N(6)-ubiquitinyl-L-lysine.. Its pathway is protein modification; protein ubiquitination. In terms of biological role, E3 ubiquitin-protein ligase which accepts ubiquitin from E2 ubiquitin-conjugating enzymes UBE2L3 and UBE2L6 in the form of a thioester and then directly transfers the ubiquitin to targeted substrates, such as UCKL1. Involved in the cytolytic activity of natural killer cells and cytotoxic T-cells. Protects against staurosporin-induced cell death. The chain is E3 ubiquitin-protein ligase RNF19B (rnf19b) from Xenopus laevis (African clawed frog).